Consider the following 412-residue polypeptide: Potassium channel, subfamily K, member 13 (412 aa).

Residues 1–21 (MACRSGCCCNSIGSFNEDNAR) lie on the Cytoplasmic side of the membrane. The chain crosses the membrane as a helical span at residues 22–42 (FLMLALLIIIYLLCGAAVFSA). An intramembrane region (pore-forming) is located at residues 97–117 (WDFAGAFYFVGTVVSTIGFGM). 3 residues coordinate K(+): Thr112, Ile113, and Gly114. Residues 112–117 (TIGFGM) are selectivity filter 1. Residues 127–147 (IFLIFYGLIGCAATILFFNLF) traverse the membrane as a helical segment. Topologically, residues 148 to 198 (LERVITVIAFVLKFCHERRESRKAGPTQNCRRPSTDNRDRRTDSLAGWKPS) are cytoplasmic. The helical transmembrane segment at 199–219 (VYCVMLILGVAAILVSCCASA) threads the bilayer. An intramembrane region (pore-forming) is located at residues 229 to 249 (YLDALYFCFVAFSTIGFGDMV). Residues Thr242, Ile243, Gly244, and Phe245 each coordinate K(+). The selectivity filter 2 stretch occupies residues 242-247 (TIGFGD). Residues 268-288 (LFILTGVCCIYSLFNVISIVI) traverse the membrane as a helical segment. The Cytoplasmic segment spans residues 289–412 (KQVLNWLLRR…NRLAETSVDR (124 aa)). Positions 374–386 (MANGHPRQSGSSS) are enriched in polar residues. Residues 374–395 (MANGHPRQSGSSSRHNEFSGGV) are disordered.

This sequence belongs to the two pore domain potassium channel (TC 1.A.1.8) family. As to quaternary structure, homodimer. Heterodimer. In terms of tissue distribution, brain and heart.

It is found in the cell membrane. The catalysed reaction is K(+)(in) = K(+)(out). The channel conductance is activated by arachidonic acid and inhibited by Ba(2+) ions, volatile anesthetics such as halothane and antiarrhythmic drug mexiletine. Insensitive to extracellular pH change. Functionally, k(+) channel that conducts outward rectifying tonic currents potentiated by purinergic signals. Homo- and heterodimerizes to form functional channels with distinct regulatory and gating properties. Contributes most of K(+) currents at the plasma membrane of resting microglia. Maintains a depolarized membrane potential required for proper ramified microglia morphology and phagocytosis, selectively mediating microglial pruning of presynaptic compartments at hippocampal excitatory synapses. Upon local release of ATP caused by neuronal injury or infection, it is potentiated by purinergic signaling and contributes to ATP-triggered K(+) efflux underlying microglial NLRP3 inflammasome assembly and IL1B release. This is Potassium channel, subfamily K, member 13 from Danio rerio (Zebrafish).